Reading from the N-terminus, the 565-residue chain is DNA repair protein RAD7 (565 aa).

Disordered regions lie at residues 1 to 22 and 41 to 68; these read MYRS…PNSA and WYQR…FTAE. The tract at residues 1–200 is hydrophilic; that stretch reads MYRSRNRPKR…SKLVFNKLRD (200 aa). Basic and acidic residues predominate over residues 47 to 62; that stretch reads KKQEDATDEKKGKAED. Residues S64 and S85 each carry the phosphoserine modification. The tract at residues 105 to 137 is disordered; sequence ADSDEEEYETSHISDTPVSLSSANDRESLTKKR. Residues 115–127 are compositionally biased toward polar residues; sequence SHISDTPVSLSSA.

This sequence to S.pombe SpCC613.14. Component of the global genome repair (GGR) complex composed of at least ABF1, RAD7 and RAD16. Interacts with ELC1.

Functionally, component of the global genome repair (GGR) complex which promotes global genome nucleotide excision repair (GG-NER) which removes DNA damage from nontranscribing DNA. This protein is one of 10 proteins (RAD1, 2,3,4,7,10,14, 16,23 and MMS19) involved in excision repair of DNA damaged with UV light, bulky adducts, or cross-linking agents. The protein is DNA repair protein RAD7 (RAD7) of Saccharomyces cerevisiae (strain ATCC 204508 / S288c) (Baker's yeast).